A 1697-amino-acid polypeptide reads, in one-letter code: UDP-sugar-dependent glycosyltransferase 52 (1697 aa).

Disordered regions lie at residues 20-40 and 142-166; these read HSDS…NYEN and STDL…LMIP. One can recognise a PH domain in the interval 234-332; that stretch reads DYVLENYLYK…WYHEINRMQK (99 aa). Disordered regions lie at residues 573-645 and 707-756; these read FRSK…TTHE and PLDK…KQSQ. Low complexity-rich tracts occupy residues 584 to 628 and 711 to 722; these read QNSQ…SSSA and QQQQQQQQQQQQ. 2 consecutive GRAM domains span residues 658–793 and 881–948; these read STFH…TKER and IKIK…KKYS. Residues 739–749 are compositionally biased toward acidic residues; sequence TDSDTDSESDF. 4 disordered regions span residues 1011–1047, 1062–1085, 1110–1130, and 1466–1488; these read SPSI…IHST, DGEN…SNSF, SAQQ…STTT, and EHNN…SNKS. Low complexity-rich tracts occupy residues 1026–1047, 1065–1084, 1112–1130, and 1469–1479; these read PPSS…IHST, NNSN…KSNS, QQQQ…STTT, and NNNNNNNNNNN. An FYVE-type zinc finger spans residues 1622–1685; sequence SSAPNSCMGC…VCDKCFNDLQ (64 aa). Zn(2+)-binding residues include Cys1628, Cys1631, Cys1647, Cys1650, Cys1655, Cys1658, Cys1677, and Cys1680.

It belongs to the glycosyltransferase 28 family.

It catalyses the reaction a sterol + UDP-alpha-D-glucose = a sterol 3-beta-D-glucoside + UDP + H(+). In terms of biological role, involved in the biosynthesis of sterol glucoside. Can use different sterols such as cholesterol, sitosterol, and ergosterol as sugar acceptors. This is UDP-sugar-dependent glycosyltransferase 52 (ugt52) from Dictyostelium discoideum (Social amoeba).